Consider the following 240-residue polypeptide: 4-hydroxy-tetrahydrodipicolinate reductase (240 aa).

NAD(+) is bound by residues 79–81 (ATT) and 103–106 (SANM). The active-site Proton donor/acceptor is the His-135. Position 136 (His-136) interacts with (S)-2,3,4,5-tetrahydrodipicolinate. The active-site Proton donor is Lys-139. 145-146 (GT) provides a ligand contact to (S)-2,3,4,5-tetrahydrodipicolinate.

This sequence belongs to the DapB family.

It localises to the cytoplasm. It carries out the reaction (S)-2,3,4,5-tetrahydrodipicolinate + NAD(+) + H2O = (2S,4S)-4-hydroxy-2,3,4,5-tetrahydrodipicolinate + NADH + H(+). The catalysed reaction is (S)-2,3,4,5-tetrahydrodipicolinate + NADP(+) + H2O = (2S,4S)-4-hydroxy-2,3,4,5-tetrahydrodipicolinate + NADPH + H(+). It functions in the pathway amino-acid biosynthesis; L-lysine biosynthesis via DAP pathway; (S)-tetrahydrodipicolinate from L-aspartate: step 4/4. Functionally, catalyzes the conversion of 4-hydroxy-tetrahydrodipicolinate (HTPA) to tetrahydrodipicolinate. The chain is 4-hydroxy-tetrahydrodipicolinate reductase from Staphylococcus aureus (strain Mu3 / ATCC 700698).